The chain runs to 609 residues: MKWVESIFLIFLLNFTESRTLHRNEYGIASILDSYQCTAEISLADLATIFFAQFVQEATYKEVSKMVKDALTAIEKPTGDEQSAGCLENQLPAFLEELCHEKEILEKYGLSDCCSQSEEGRHNCFLAHKKPTPASIPLFQVPEPVTSCEAYEEDRETFMNKFIYEIARRHPFLYAPTILLWAARYDKIIPSCCKAENAVECFQTKAATVTKELRESSLLNQHACAVMKNFGTRTFQAITVTKLSQKFTKVNFTEIQKLVLDVAHVHEHCCRGDVLDCLQDGEKIMSYICSQQDTLSNKITECCKLTTLERGQCIIHAENDEKPEGLSPNLNRFLGDRDFNQFSSGEKNIFLASFVHEYSRRHPQLAVSVILRVAKGYQELLEKCFQTENPLECQDKGEEELQKYIQESQALAKRSCGLFQKLGEYYLQNAFLVAYTKKAPQLTSSELMAITRKMAATAATCCQLSEDKLLACGEGAADIIIGHLCIRHEMTPVNPGVGQCCTSSYANRRPCFSSLVVDETYVPPAFSDDKFIFHKDLCQAQGVALQTMKQEFLINLVKQKPQITEEQLETVIADFSGLLEKCCQGQEQEVCFAEEGQKLISKTRTALGV.

Positions 1-18 (MKWVESIFLIFLLNFTES) are cleaved as a signal peptide. 3 Albumin domains span residues 19–210 (RTLH…ATVT), 211–402 (KELR…EELQ), and 403–601 (KYIQ…KLIS). Cu(2+) is bound at residue histidine 22. Intrachain disulfides connect cysteine 99-cysteine 114, cysteine 113-cysteine 124, cysteine 148-cysteine 193, cysteine 192-cysteine 201, cysteine 224-cysteine 270, cysteine 269-cysteine 277, cysteine 289-cysteine 303, and cysteine 302-cysteine 313. 3 positions are modified to phosphoserine: serine 111, serine 115, and serine 117. Asparagine 251 is a glycosylation site (N-linked (GlcNAc...) asparagine). The residue at position 344 (serine 344) is a Phosphoserine. 7 disulfides stabilise this stretch: cysteine 384–cysteine 393, cysteine 416–cysteine 462, cysteine 461–cysteine 472, cysteine 485–cysteine 501, cysteine 500–cysteine 511, cysteine 538–cysteine 583, and cysteine 582–cysteine 591. Serine 444 bears the Phosphoserine mark.

Belongs to the ALB/AFP/VDB family. Dimeric and trimeric forms have been found in addition to the monomeric form. Sulfated. Plasma.

The protein localises to the secreted. Its function is as follows. Binds copper, nickel, and fatty acids as well as, and bilirubin less well than, serum albumin. The chain is Alpha-fetoprotein (AFP) from Gorilla gorilla gorilla (Western lowland gorilla).